A 203-amino-acid polypeptide reads, in one-letter code: Protein GrpE (203 aa).

Residues 1 to 10 show a composition bias toward basic and acidic residues; it reads MSNESIKAEQ. The interval 1 to 20 is disordered; sequence MSNESIKAEQDLIQEGVESE.

It belongs to the GrpE family. As to quaternary structure, homodimer.

The protein resides in the cytoplasm. Its function is as follows. Participates actively in the response to hyperosmotic and heat shock by preventing the aggregation of stress-denatured proteins, in association with DnaK and GrpE. It is the nucleotide exchange factor for DnaK and may function as a thermosensor. Unfolded proteins bind initially to DnaJ; upon interaction with the DnaJ-bound protein, DnaK hydrolyzes its bound ATP, resulting in the formation of a stable complex. GrpE releases ADP from DnaK; ATP binding to DnaK triggers the release of the substrate protein, thus completing the reaction cycle. Several rounds of ATP-dependent interactions between DnaJ, DnaK and GrpE are required for fully efficient folding. This chain is Protein GrpE, found in Shewanella sp. (strain MR-4).